Consider the following 196-residue polypeptide: ATP-dependent Clp protease proteolytic subunit (196 aa).

Serine 96 functions as the Nucleophile in the catalytic mechanism. Residue histidine 121 is part of the active site.

Belongs to the peptidase S14 family. In terms of assembly, fourteen ClpP subunits assemble into 2 heptameric rings which stack back to back to give a disk-like structure with a central cavity, resembling the structure of eukaryotic proteasomes.

The protein localises to the cytoplasm. It carries out the reaction Hydrolysis of proteins to small peptides in the presence of ATP and magnesium. alpha-casein is the usual test substrate. In the absence of ATP, only oligopeptides shorter than five residues are hydrolyzed (such as succinyl-Leu-Tyr-|-NHMec, and Leu-Tyr-Leu-|-Tyr-Trp, in which cleavage of the -Tyr-|-Leu- and -Tyr-|-Trp bonds also occurs).. Its function is as follows. Cleaves peptides in various proteins in a process that requires ATP hydrolysis. Has a chymotrypsin-like activity. Plays a major role in the degradation of misfolded proteins. The chain is ATP-dependent Clp protease proteolytic subunit from Streptococcus thermophilus (strain CNRZ 1066).